The chain runs to 120 residues: Large ribosomal subunit protein uL18 (120 aa).

Positions 1–22 are disordered; the sequence is MKTTRKESLKRRHRRIRRKVSG. The span at 8-20 shows a compositional bias: basic residues; that stretch reads SLKRRHRRIRRKV.

It belongs to the universal ribosomal protein uL18 family. Part of the 50S ribosomal subunit; part of the 5S rRNA/L5/L18/L25 subcomplex. Contacts the 5S and 23S rRNAs.

Its function is as follows. This is one of the proteins that bind and probably mediate the attachment of the 5S RNA into the large ribosomal subunit, where it forms part of the central protuberance. The protein is Large ribosomal subunit protein uL18 of Crocosphaera subtropica (strain ATCC 51142 / BH68) (Cyanothece sp. (strain ATCC 51142)).